The primary structure comprises 242 residues: Uridylate kinase (242 aa).

17–20 (KLSG) is a binding site for ATP. Gly-59 is a binding site for UMP. ATP-binding residues include Gly-60 and Arg-64. UMP contacts are provided by residues Asp-79 and 140–147 (TGNPFFTT). 3 residues coordinate ATP: Thr-167, Tyr-173, and Asp-176.

Belongs to the UMP kinase family. Homohexamer.

It is found in the cytoplasm. The catalysed reaction is UMP + ATP = UDP + ADP. It participates in pyrimidine metabolism; CTP biosynthesis via de novo pathway; UDP from UMP (UMPK route): step 1/1. Inhibited by UTP. Catalyzes the reversible phosphorylation of UMP to UDP. In Marinobacter nauticus (strain ATCC 700491 / DSM 11845 / VT8) (Marinobacter aquaeolei), this protein is Uridylate kinase.